We begin with the raw amino-acid sequence, 79 residues long: Large ribosomal subunit protein uL24 (79 aa).

This sequence belongs to the universal ribosomal protein uL24 family. As to quaternary structure, part of the 50S ribosomal subunit.

In terms of biological role, one of two assembly initiator proteins, it binds directly to the 5'-end of the 23S rRNA, where it nucleates assembly of the 50S subunit. Its function is as follows. One of the proteins that surrounds the polypeptide exit tunnel on the outside of the subunit. This is Large ribosomal subunit protein uL24 from Lactobacillus johnsonii (strain CNCM I-12250 / La1 / NCC 533).